The sequence spans 230 residues: Flagellar L-ring protein (230 aa).

Positions 1 to 15 are cleaved as a signal peptide; that stretch reads MSRPPLLSSACLAAT. A lipid anchor (N-palmitoyl cysteine) is attached at cysteine 16. Cysteine 16 carries S-diacylglycerol cysteine lipidation.

Belongs to the FlgH family. In terms of assembly, the basal body constitutes a major portion of the flagellar organelle and consists of four rings (L,P,S, and M) mounted on a central rod.

Its subcellular location is the cell outer membrane. The protein resides in the bacterial flagellum basal body. Its function is as follows. Assembles around the rod to form the L-ring and probably protects the motor/basal body from shearing forces during rotation. In Xanthomonas oryzae pv. oryzae (strain MAFF 311018), this protein is Flagellar L-ring protein.